We begin with the raw amino-acid sequence, 132 residues long: Holo-[acyl-carrier-protein] synthase (132 aa).

The Mg(2+) site is built by D8 and E62.

This sequence belongs to the P-Pant transferase superfamily. AcpS family. Mg(2+) serves as cofactor.

Its subcellular location is the cytoplasm. The enzyme catalyses apo-[ACP] + CoA = holo-[ACP] + adenosine 3',5'-bisphosphate + H(+). Transfers the 4'-phosphopantetheine moiety from coenzyme A to a Ser of acyl-carrier-protein. This Leptothrix cholodnii (strain ATCC 51168 / LMG 8142 / SP-6) (Leptothrix discophora (strain SP-6)) protein is Holo-[acyl-carrier-protein] synthase.